The sequence spans 338 residues: MSGDFLIKNLSTSAWKTNITVLNGSYYIDTSVCVTRNQAMILLSIIISLVGMGLNAIVLWFLGIRMHTNAFTVYILNLAMADFLYLCSQFVICLLIAFYIFYSIDINIPLVLYVVPIFAYLSGLSILSTISIERCLSVIWPIWYRCKRPRHTSAITCFVLWVMSLLLGLLEGKACGLLFNSFDSYWCETFDVITNIWSVVFFGVLCGSSLTLLVRIFCGSQRIPMTRLYVTITLTVLVFLIFGLPFGIYWILYQWISNFYYVEICNFYLEILFLSCVNSCMNPIIYFLVGSIRHRRFRRKTLKLLLQRAMQDTPEEEQSGNKSSSEHPEELETVQSCS.

Topologically, residues 1–40 (MSGDFLIKNLSTSAWKTNITVLNGSYYIDTSVCVTRNQAM) are extracellular. N-linked (GlcNAc...) asparagine glycans are attached at residues N9, N18, and N23. The helical transmembrane segment at 41–61 (ILLSIIISLVGMGLNAIVLWF) threads the bilayer. Residues 62 to 89 (LGIRMHTNAFTVYILNLAMADFLYLCSQ) are Cytoplasmic-facing. Residues 90 to 110 (FVICLLIAFYIFYSIDINIPL) form a helical membrane-spanning segment. A topological domain (extracellular) is located at residue V111. The chain crosses the membrane as a helical span at residues 112–132 (LYVVPIFAYLSGLSILSTISI). At 133–157 (ERCLSVIWPIWYRCKRPRHTSAITC) the chain is on the cytoplasmic side. Residues 158–178 (FVLWVMSLLLGLLEGKACGLL) form a helical membrane-spanning segment. At 179-191 (FNSFDSYWCETFD) the chain is on the extracellular side. The helical transmembrane segment at 192–212 (VITNIWSVVFFGVLCGSSLTL) threads the bilayer. Residues 213–231 (LVRIFCGSQRIPMTRLYVT) lie on the Cytoplasmic side of the membrane. A helical transmembrane segment spans residues 232 to 252 (ITLTVLVFLIFGLPFGIYWIL). Topologically, residues 253–268 (YQWISNFYYVEICNFY) are extracellular. The helical transmembrane segment at 269–289 (LEILFLSCVNSCMNPIIYFLV) threads the bilayer. At 290–338 (GSIRHRRFRRKTLKLLLQRAMQDTPEEEQSGNKSSSEHPEELETVQSCS) the chain is on the cytoplasmic side. Positions 310-338 (MQDTPEEEQSGNKSSSEHPEELETVQSCS) are disordered.

The protein belongs to the G-protein coupled receptor 1 family. Mas subfamily. As to expression, mast cell-specific.

Its subcellular location is the cell membrane. Functionally, mast cell-specific receptor for basic secretagogues, i.e. cationic amphiphilic drugs, as well as endo- or exogenous peptides, consisting of a basic head group and a hydrophobic core. Recognizes and binds small molecules containing a cyclized tetrahydroisoquinoline (THIQ), such as non-steroidal neuromuscular blocking drugs (NMBDs), including tubocurarine and atracurium. In response to these compounds, mediates pseudo-allergic reactions characterized by histamine release, inflammation and airway contraction. The sequence is that of Mas-related G-protein coupled receptor member B2 (Mrgprb2) from Mus musculus (Mouse).